The sequence spans 65 residues: Keratin-associated protein 20-2 (65 aa).

This sequence belongs to the KRTAP type 20 family. In terms of assembly, interacts with hair keratins.

In terms of biological role, in the hair cortex, hair keratin intermediate filaments are embedded in an interfilamentous matrix, consisting of hair keratin-associated proteins (KRTAP), which are essential for the formation of a rigid and resistant hair shaft through their extensive disulfide bond cross-linking with abundant cysteine residues of hair keratins. The matrix proteins include the high-sulfur and high-glycine-tyrosine keratins. The polypeptide is Keratin-associated protein 20-2 (KRTAP20-2) (Homo sapiens (Human)).